A 360-amino-acid polypeptide reads, in one-letter code: MAGNSIGQLFRVTTFGESHGIALGCIVDGVPPNMALSEADIQPDLDRRKPGTSRYTTARREADEIQILSGVFEGKTTGTSIGLIIKNADQRSKDYGDIMDKFRPGHADYTYQQKYGIRDYRGGGRSSARETAMRVAAGAIAKKYLRERFGIEIRGYLSQIGEVKIDPQTVADVTKINWQQVADNPFFCPDKSAVEKFDELIRKLKKEGNSIGAKLTVVAENVPVGLGEPVFDRLDAELAHALMGINAVKAVEIGDGFDVVAQKGTEHRDEMTPAGFLSNHAGGILGGISNGQPIIATIALKPTSSITIPGRTVDINNKPVELITKGRHDPCVGIRAVPIAEAMVAIILLDHLLRFKAQCK.

NADP(+) is bound by residues Arg-48 and Arg-54. Residues 125-127, 246-247, Gly-286, 301-305, and Arg-327 each bind FMN; these read RSS, NA, and KPTSS.

It belongs to the chorismate synthase family. As to quaternary structure, homotetramer. The cofactor is FMNH2.

It carries out the reaction 5-O-(1-carboxyvinyl)-3-phosphoshikimate = chorismate + phosphate. It functions in the pathway metabolic intermediate biosynthesis; chorismate biosynthesis; chorismate from D-erythrose 4-phosphate and phosphoenolpyruvate: step 7/7. Its function is as follows. Catalyzes the anti-1,4-elimination of the C-3 phosphate and the C-6 proR hydrogen from 5-enolpyruvylshikimate-3-phosphate (EPSP) to yield chorismate, which is the branch point compound that serves as the starting substrate for the three terminal pathways of aromatic amino acid biosynthesis. This reaction introduces a second double bond into the aromatic ring system. This Actinobacillus succinogenes (strain ATCC 55618 / DSM 22257 / CCUG 43843 / 130Z) protein is Chorismate synthase.